Reading from the N-terminus, the 187-residue chain is Ribosome-recycling factor (187 aa).

It belongs to the RRF family.

The protein resides in the cytoplasm. Responsible for the release of ribosomes from messenger RNA at the termination of protein biosynthesis. May increase the efficiency of translation by recycling ribosomes from one round of translation to another. The polypeptide is Ribosome-recycling factor (Ruegeria pomeroyi (strain ATCC 700808 / DSM 15171 / DSS-3) (Silicibacter pomeroyi)).